The sequence spans 256 residues: Trypsinogen-like protein 3 (256 aa).

Positions Met1 to Ala14 are cleaved as a signal peptide. The 223-residue stretch at Ser15–Ala237 folds into the Peptidase S1 domain. 6 disulfides stabilise this stretch: Cys23–Cys153, Cys41–Cys57, Cys125–Cys226, Cys132–Cys199, Cys164–Cys180, and Cys189–Cys213.

The protein belongs to the peptidase S1 family.

This chain is Trypsinogen-like protein 3 (trp3), found in Pseudopleuronectes americanus (Winter flounder).